A 234-amino-acid polypeptide reads, in one-letter code: Cytidylate kinase (234 aa).

10-18 serves as a coordination point for ATP; it reads GYSACGKST.

It belongs to the cytidylate kinase family. Type 1 subfamily.

The protein localises to the cytoplasm. The catalysed reaction is CMP + ATP = CDP + ADP. It catalyses the reaction dCMP + ATP = dCDP + ADP. This chain is Cytidylate kinase, found in Cytophaga hutchinsonii (strain ATCC 33406 / DSM 1761 / CIP 103989 / NBRC 15051 / NCIMB 9469 / D465).